We begin with the raw amino-acid sequence, 774 residues long: Fatty acid oxidation complex subunit alpha (774 aa).

Disordered stretches follow at residues 1–31 and 617–641; these read MSKE…VGAS and YLYS…RNSF. The enoyl-CoA hydratase stretch occupies residues 1–224; the sequence is MSKENIVTRE…KMGLVDDVVP (224 aa). 2 stretches are compositionally biased toward polar residues: residues 8 to 31 and 620 to 637; these read TREN…VGAS and SNPT…SPAK. A 3-hydroxyacyl-CoA dehydrogenase region spans residues 340 to 774; that stretch reads RAIHRVGVLG…NIDEVTDVAS (435 aa).

It in the N-terminal section; belongs to the enoyl-CoA hydratase/isomerase family. This sequence in the central section; belongs to the 3-hydroxyacyl-CoA dehydrogenase family. Heterotetramer of two alpha chains (FadJ) and two beta chains (FadI).

It localises to the cytoplasm. The enzyme catalyses a (3S)-3-hydroxyacyl-CoA = a (2E)-enoyl-CoA + H2O. It catalyses the reaction a 4-saturated-(3S)-3-hydroxyacyl-CoA = a (3E)-enoyl-CoA + H2O. The catalysed reaction is a (3S)-3-hydroxyacyl-CoA + NAD(+) = a 3-oxoacyl-CoA + NADH + H(+). It carries out the reaction (3S)-3-hydroxybutanoyl-CoA = (3R)-3-hydroxybutanoyl-CoA. Its pathway is lipid metabolism; fatty acid beta-oxidation. In terms of biological role, catalyzes the formation of a hydroxyacyl-CoA by addition of water on enoyl-CoA. Also exhibits 3-hydroxyacyl-CoA epimerase and 3-hydroxyacyl-CoA dehydrogenase activities. The polypeptide is Fatty acid oxidation complex subunit alpha (Yersinia pestis (strain Pestoides F)).